A 214-amino-acid polypeptide reads, in one-letter code: Probable GTP-binding protein EngB (214 aa).

The region spanning 25–203 is the EngB-type G domain; sequence EGAEVAFAGR…EQVITGWLNL (179 aa). GTP-binding positions include 33-40, 60-64, 80-83, 147-150, and 182-184; these read GRSNAGKS, GRTQL, DLPG, TKSD, and FSS. Mg(2+) is bound by residues Ser40 and Thr62.

Belongs to the TRAFAC class TrmE-Era-EngA-EngB-Septin-like GTPase superfamily. EngB GTPase family. The cofactor is Mg(2+).

Necessary for normal cell division and for the maintenance of normal septation. This Teredinibacter turnerae (strain ATCC 39867 / T7901) protein is Probable GTP-binding protein EngB.